A 325-amino-acid polypeptide reads, in one-letter code: Polyprenyl transferase mpaA (325 aa).

The next 3 helical transmembrane spans lie at 27–47 (MPYY…ALKL), 56–76 (VEYI…LCGA), and 108–128 (VEAL…LDLI). Residue N131 is glycosylated (N-linked (GlcNAc...) asparagine). 6 helical membrane-spanning segments follow: residues 134-151 (IWGL…YPYL), 159-179 (VFIY…ITGW), 192-212 (IFTH…YFNT), 240-260 (LFLA…VLKI), 262-282 (SPWL…MQIV), and 295-315 (IHWD…VEVG).

The protein belongs to the UbiA prenyltransferase family. The cofactor is Mg(2+).

It localises to the golgi apparatus membrane. It catalyses the reaction 5,7-dihydroxy-4-methylphthalide + (2E,6E)-farnesyl diphosphate = 4-farnesyl-3,5-dihydroxy-6-methylphthalide + diphosphate. Its pathway is secondary metabolite biosynthesis; terpenoid biosynthesis. Functionally, polyprenyl transferase; part of the gene cluster that mediates the biosynthesis of mycophenolic acid (MPA), the first isolated antibiotic natural product in the world obtained from a culture of Penicillium brevicompactum in 1893. MpaA is a Golgi apparatus-associated enzyme that catalyzes the prenylation of 5,7-dihydroxy-4,6-dimethylphthalide (DHMP) to yield farnesyl-DHMP (FDHMP). The first step of the pathway is the synthesis of 5-methylorsellinic acid (5MOA) by the cytosolic polyketide synthase mpaC. 5MOA is then converted to the phthalide compound 5,7-dihydroxy-4,6-dimethylphthalide (DHMP) by the endoplasmic reticulum-bound cytochrome P450 monooxygenase mpaDE. MpaDE first catalyzes hydroxylation of 5-MOA to 4,6-dihydroxy-2-(hydroxymethyl)-3-methylbenzoic acid (DHMB). MpaDE then acts as a lactone synthase that catalyzes the ring closure to convert DHMB into DHMP. The next step is the prenylation of DHMP by the Golgi apparatus-associated prenyltransferase mpaA to yield farnesyl-DHMP (FDHMP). The ER-bound oxygenase mpaB then mediates the oxidative cleavage the C19-C20 double bond in FDHMP to yield FDHMP-3C via a mycophenolic aldehyde intermediate. The O-methyltransferase mpaG catalyzes the methylation of FDHMP-3C to yield MFDHMP-3C. After the cytosolic methylation of FDHMP-3C, MFDHMP-3C enters into peroxisomes probably via free diffusion due to its low molecular weight. Upon a peroxisomal CoA ligation reaction, catalyzed by a beta-oxidation component enzyme acyl-CoA ligase ACL891, MFDHMP-3C-CoA would then be restricted to peroxisomes for the following beta-oxidation pathway steps. The peroxisomal beta-oxidation machinery than converts MFDHMP-3C-CoA into MPA_CoA, via a beta-oxidation chain-shortening process. Finally mpaH acts as a peroxisomal acyl-CoA hydrolase with high substrate specificity toward MPA-CoA to release the final product MPA. The sequence is that of Polyprenyl transferase mpaA from Penicillium roqueforti (strain FM164).